A 337-amino-acid chain; its full sequence is Heme A synthase (337 aa).

The next 5 helical transmembrane spans lie at 6–26 (ITKW…IGGI), 87–107 (FIHR…LIYF), 119–139 (LPYI…WYMV), 154–174 (LAFH…QLIK), and 192–212 (LIFS…GALV). Residue histidine 256 participates in heme binding. The next 3 helical transmembrane spans lie at 258-278 (LGGY…LKIE), 285-305 (IAYF…ITLL), and 308-328 (VPII…SIII). Histidine 316 is a heme binding site.

This sequence belongs to the COX15/CtaA family. Type 2 subfamily. As to quaternary structure, interacts with CtaB. It depends on heme b as a cofactor.

The protein resides in the cell membrane. The catalysed reaction is Fe(II)-heme o + 2 A + H2O = Fe(II)-heme a + 2 AH2. The protein operates within porphyrin-containing compound metabolism; heme A biosynthesis; heme A from heme O: step 1/1. Its function is as follows. Catalyzes the conversion of heme O to heme A by two successive hydroxylations of the methyl group at C8. The first hydroxylation forms heme I, the second hydroxylation results in an unstable dihydroxymethyl group, which spontaneously dehydrates, resulting in the formyl group of heme A. This chain is Heme A synthase, found in Rickettsia massiliae (strain Mtu5).